Consider the following 79-residue polypeptide: Large ribosomal subunit protein uL30 (79 aa).

This sequence belongs to the universal ribosomal protein uL30 family. As to quaternary structure, part of the 50S ribosomal subunit.

The polypeptide is Large ribosomal subunit protein uL30 (Anaeromyxobacter sp. (strain Fw109-5)).